A 337-amino-acid polypeptide reads, in one-letter code: Protein ABHD13 (337 aa).

The chain crosses the membrane as a helical; Signal-anchor for type II membrane protein span at residues phenylalanine 37–leucine 57. Catalysis depends on charge relay system residues serine 193, aspartate 268, and histidine 298. N-linked (GlcNAc...) asparagine glycosylation is present at asparagine 299.

This sequence belongs to the serine esterase family.

Its subcellular location is the membrane. In Mus musculus (Mouse), this protein is Protein ABHD13.